The following is a 570-amino-acid chain: Periplasmic trehalase (570 aa).

The signal sequence occupies residues 1 to 34; the sequence is MIPPEIRRSVLLQKAIKLALAGTLLTFASFSATA. Residues R159, 166 to 167, N203, 212 to 214, 284 to 286, and G317 contribute to the substrate site; these read WD, RSQ, and RPE. Active-site proton donor/acceptor residues include D319 and E503. E518 is a binding site for substrate. The disordered stretch occupies residues 544 to 570; sequence KPCDSVPSTRPASLSATPTKTPSAATQ. Positions 554–570 are enriched in low complexity; sequence PASLSATPTKTPSAATQ.

Belongs to the glycosyl hydrolase 37 family. Monomer.

The protein localises to the periplasm. The enzyme catalyses alpha,alpha-trehalose + H2O = alpha-D-glucose + beta-D-glucose. Provides the cells with the ability to utilize trehalose at high osmolarity by splitting it into glucose molecules that can subsequently be taken up by the phosphotransferase-mediated uptake system. This is Periplasmic trehalase from Salmonella newport (strain SL254).